Consider the following 102-residue polypeptide: Large ribosomal subunit protein uL24 (102 aa).

This sequence belongs to the universal ribosomal protein uL24 family. Part of the 50S ribosomal subunit.

In terms of biological role, one of two assembly initiator proteins, it binds directly to the 5'-end of the 23S rRNA, where it nucleates assembly of the 50S subunit. One of the proteins that surrounds the polypeptide exit tunnel on the outside of the subunit. This chain is Large ribosomal subunit protein uL24, found in Finegoldia magna (strain ATCC 29328 / DSM 20472 / WAL 2508) (Peptostreptococcus magnus).